Consider the following 2261-residue polypeptide: MACWPQLRLLLWKNLTFRRRQTCQLLLEVAWPLFIFLILISVRLSYPPYEQHECHFPNKAMPSAGTLPWVQGIICNANNPCFRYPTPGEAPGVVGNFNKSIVARLFSDARRLLLYSQKDTSMKDMRKVLRTLQQIKKSSSNLKLQDFLVDNETFSGFLYHNLSLPKSTVDKMLRADVILHKVFLQGYQLHLTSLCNGSKSEEMIQLGDQEVSELCGLPREKLAAAERVLRSNMDILKPILRTLNSTSPFPSKELAEATKTLLHSLGTLAQELFSMRSWSDMRQEVMFLTNVNSSSSSTQIYQAVSRIVCGHPEGGGLKIKSLNWYEDNNYKALFGGNGTEEDAETFYDNSTTPYCNDLMKNLESSPLSRIIWKALKPLLVGKILYTPDTPATRQVMAEVNKTFQELAVFHDLEGMWEELSPKIWTFMENSQEMDLVRMLLDSRDNDHFWEQQLDGLDWTAQDIVAFLAKHPEDVQSSNGSVYTWREAFNETNQAIRTISRFMECVNLNKLEPIATEVWLINKSMELLDERKFWAGIVFTGITPGSIELPHHVKYKIRMDIDNVERTNKIKDGYWDPGPRADPFEDMRYVWGGFAYLQDVVEQAIIRVLTGTEKKTGVYMQQMPYPCYVDDIFLRVMSRSMPLFMTLAWIYSVAVIIKGIVYEKEARLKETMRIMGLDNSILWFSWFISSLIPLLVSAGLLVVILKLGNLLPYSDPSVVFVFLSVFAVVTILQCFLISTLFSRANLAAACGGIIYFTLYLPYVLCVAWQDYVGFTLKIFASLLSPVAFGFGCEYFALFEEQGIGVQWDNLFESPVEEDGFNLTTSVSMMLFDTFLYGVMTWYIEAVFPGQYGIPRPWYFPCTKSYWFGEESDEKSHPGSNQKRISEICMEEEPTHLKLGVSIQNLVKVYRDGMKVAVDGLALNFYEGQITSFLGHNGAGKTTTMSILTGLFPPTSGTAYILGKDIRSEMSTIRQNLGVCPQHNVLFDMLTVEEHIWFYARLKGLSEKHVKAEMEQMALDVGLPSSKLKSKTSQLSGGMQRKLSVALAFVGGSKVVILDEPTAGVDPYSRRGIWELLLKYRQGRTIILSTHHMDEADVLGDRIAIISHGKLCCVGSSLFLKNQLGTGYYLTLVKKDVESSLSSCRNSSSTVSYLKKEDSVSQSSSDAGLGSDHESDTLTIDVSAISNLIRKHVSEARLVEDIGHELTYVLPYEAAKEGAFVELFHEIDDRLSDLGISSYGISETTLEEIFLKVAEESGVDAETSDGTLPARRNRRAFGDKQSCLRPFTEDDAADPNDSDIDPESRETDLLSGMDGKGSYQVKGWKLTQQQFVALLWKRLLIARRSRKGFFAQIVLPAVFVCIALVFSLIVPPFGKYPSLELQPWMYNEQYTFVSNDAPEDTGTLELLNALTKDPGFGTRCMEGNPIPDTPCQAGEEEWTTAPVPQTIMDLFQNGNWTMQNPSPACQCSSDKIKKMLPVCPPGAGGLPPPQRKQNTADILQDLTGRNISDYLVKTYVQIIAKSLKNKIWVNEFRYGGFSLGVSNTQALPPSQEVNDAIKQMKKHLKLAKDSSADRFLNSLGRFMTGLDTKNNVKVWFNNKGWHAISSFLNVINNAILRANLQKGENPSHYGITAFNHPLNLTKQQLSEVALMTTSVDVLVSICVIFAMSFVPASFVVFLIQERVSKAKHLQFISGVKPVIYWLSNFVWDMCNYVVPATLVIIIFICFQQKSYVSSTNLPVLALLLLLYGWSITPLMYPASFVFKIPSTAYVVLTSVNLFIGINGSVATFVLELFTDNKLNNINDILKSVFLIFPHFCLGRGLIDMVKNQAMADALERFGENRFVSPLSWDLVGRNLFAMAVEGVVFFLITVLIQYRFFIRPRPVNAKLSPLNDEDEDVRRERQRILDGGGQNDILEIKELTKIYRRKRKPAVDRICVGIPPGECFGLLGVNGAGKSSTFKMLTGDTTVTRGDAFLNKNSILSNIHEVHQNMGYCPQFDAITELLTGREHVEFFALLRGVPEKEVGKVGEWAIRKLGLVKYGEKYAGNYSGGNKRKLSTAMALIGGPPVVFLDEPTTGMDPKARRFLWNCALSVVKEGRSVVLTSHSMEECEALCTRMAIMVNGRFRCLGSVQHLKNRFGDGYTIVVRIAGSNPDLKPVQDFFGLAFPGSVLKEKHRNMLQYQLPSSLSSLARIFSILSQSKKRLHIEDYSVSQTTLDQVFVNFAKDQSDDDHLKDLSLHKNQTVVDVAVLTSFLQDEKVKESYV.

A lipid anchor (S-palmitoyl cysteine) is attached at C3. The N-linked (GlcNAc...) asparagine glycan is linked to N14. Residues 22–42 (TCQLLLEVAWPLFIFLILISV) traverse the membrane as a helical segment. The S-palmitoyl cysteine moiety is linked to residue C23. At 43-639 (RLSYPPYEQH…DIFLRVMSRS (597 aa)) the chain is on the extracellular side. Residues 69-80 (WVQGIICNANNP) form an annulus domain 1 region. C75 and C309 are oxidised to a cystine. N-linked (GlcNAc...) asparagine glycans are attached at residues N98, N151, N161, N196, N244, N292, N337, and N349. The segment at 368–379 (SRIIWKALKPLL) is annulus domain 2. N400, N478, N489, and N521 each carry an N-linked (GlcNAc...) asparagine glycan. The segment at 564 to 594 (ERTNKIKDGYWDPGPRADPFEDMRYVWGGFA) is gateway domain. 5 helical membrane-spanning segments follow: residues 640–660 (MPLF…KGIV), 683–703 (FSWF…LVVI), 716–736 (SVVF…CFLI), 745–765 (LAAA…VLCV), and 777–797 (IFAS…FALF). The N-linked (GlcNAc...) asparagine glycan is linked to N820. Residues 827–847 (MMLFDTFLYGVMTWYIEAVFP) form a helical membrane-spanning segment. One can recognise an ABC transporter 1 domain in the interval 899 to 1131 (VSIQNLVKVY…LGTGYYLTLV (233 aa)). An ATP-binding site is contributed by 933–940 (GHNGAGKT). The chain crosses the membrane as a helical span at residues 1041–1057 (LSVALAFVGGSKVVILD). S1042 carries the post-translational modification Phosphoserine; by PKA. S-palmitoyl cysteine attachment occurs at residues C1110 and C1111. N1144 and N1294 each carry an N-linked (GlcNAc...) asparagine glycan. The disordered stretch occupies residues 1283-1312 (RPFTEDDAADPNDSDIDPESRETDLLSGMD). Residues 1287–1299 (EDDAADPNDSDID) show a composition bias toward acidic residues. S1296 carries the post-translational modification Phosphoserine. Residues 1351 to 1371 (IVLPAVFVCIALVFSLIVPPF) form a helical membrane-spanning segment. The Extracellular segment spans residues 1372–1656 (GKYPSLELQP…ALMTTSVDVL (285 aa)). N-linked (GlcNAc...) asparagine glycosylation occurs at N1453. C1463 and C1477 are oxidised to a cystine. N-linked (GlcNAc...) asparagine glycosylation is found at N1504 and N1637. 6 helical membrane-spanning segments follow: residues 1657 to 1677 (VSIC…VFLI), 1703 to 1723 (FVWD…IFIC), 1735 to 1755 (LPVL…LMYP), 1768 to 1788 (VVLT…TFVL), 1802 to 1822 (ILKS…LIDM), and 1852 to 1872 (NLFA…LIQY). The ABC transporter 2 domain maps to 1912–2144 (LEIKELTKIY…FGDGYTIVVR (233 aa)). 1946-1953 (GVNGAGKS) serves as a coordination point for ATP. The N-linked (GlcNAc...) asparagine glycan is linked to N2044. S2054 carries the phosphoserine; by PKA modification. N2238 carries N-linked (GlcNAc...) asparagine glycosylation.

Belongs to the ABC transporter superfamily. ABCA family. Interacts with MEGF10. May interact with APOE1; functionally associated with APOE1 in the biogenesis of HDLs. Interacts with ABCA8; this interaction potentiates cholesterol efflux. Interacts with ABCA12 and NR1H2; this interaction is required for ABCA1 localization to the cell surface and is necessary for its normal activity and stability. Phosphorylation on Ser-2054 regulates phospholipid efflux. In terms of processing, palmitoylated by ZDHHC8. Palmitoylation is essential for localization to the plasma membrane. As to expression, widely expressed, but most abundant in macrophages.

It is found in the cell membrane. The protein localises to the endosome. The catalysed reaction is ATP + H2O + phospholipidSide 1 = ADP + phosphate + phospholipidSide 2.. It catalyses the reaction a 1,2-diacyl-sn-glycero-3-phosphocholine(out) + ATP + H2O = a 1,2-diacyl-sn-glycero-3-phosphocholine(in) + ADP + phosphate + H(+). It carries out the reaction a 1,2-diacyl-sn-glycero-3-phospho-L-serine(out) + ATP + H2O = a 1,2-diacyl-sn-glycero-3-phospho-L-serine(in) + ADP + phosphate + H(+). The enzyme catalyses a sphingomyelin(in) + ATP + H2O = a sphingomyelin(out) + ADP + phosphate + H(+). The catalysed reaction is cholesterol(in) + ATP + H2O = cholesterol(out) + ADP + phosphate + H(+). Its activity is regulated as follows. ATPase activity is decreased by cholesterol and ceramide. ATPase activity is stimulated by phosphatidylcholine and to a lesser degree by phosphatidylserine and sphingomyelin. Phospholipid translocase activity is highly reduced by berylium fluoride and aluminum flouride and reduced by N-ethylmaleimide. Functionally, catalyzes the translocation of specific phospholipids from the cytoplasmic to the extracellular/lumenal leaflet of membrane coupled to the hydrolysis of ATP. Thereby, participates in phospholipid transfer to apolipoproteins to form nascent high density lipoproteins/HDLs. Transports preferentially phosphatidylcholine over phosphatidylserine. May play a similar role in the efflux of intracellular cholesterol to apolipoproteins and the formation of nascent high density lipoproteins/HDLs. Translocates phospholipids from the outer face of the plasma membrane and forces it through its gateway and annulus into an elongated hydrophobic tunnel in its extracellular domain. The polypeptide is Phospholipid-transporting ATPase ABCA1 (Homo sapiens (Human)).